The chain runs to 278 residues: Large ribosomal subunit protein uL2 (278 aa).

Disordered stretches follow at residues M1–H58 and V225–R278. The segment covering L37–H58 has biased composition (basic residues). Basic and acidic residues predominate over residues P253–I267. A compositionally biased stretch (basic residues) spans V268–R278.

Belongs to the universal ribosomal protein uL2 family. As to quaternary structure, part of the 50S ribosomal subunit. Forms a bridge to the 30S subunit in the 70S ribosome.

Its function is as follows. One of the primary rRNA binding proteins. Required for association of the 30S and 50S subunits to form the 70S ribosome, for tRNA binding and peptide bond formation. It has been suggested to have peptidyltransferase activity; this is somewhat controversial. Makes several contacts with the 16S rRNA in the 70S ribosome. This is Large ribosomal subunit protein uL2 from Rhodococcus erythropolis (strain PR4 / NBRC 100887).